Reading from the N-terminus, the 505-residue chain is Trans-cinnamate 4-monooxygenase (505 aa).

A helical membrane pass occupies residues 3–23 (LLLLEKTLLALFIAATIAITI). Residues 212–217 (RSRLAQ) and alanine 305 each bind (E)-cinnamate. A heme-binding site is contributed by cysteine 446.

The protein belongs to the cytochrome P450 family. It depends on heme as a cofactor.

Its subcellular location is the membrane. The enzyme catalyses (E)-cinnamate + reduced [NADPH--hemoprotein reductase] + O2 = (E)-4-coumarate + oxidized [NADPH--hemoprotein reductase] + H2O + H(+). It functions in the pathway phenylpropanoid metabolism; trans-4-coumarate biosynthesis; trans-4-coumarate from trans-cinnamate: step 1/1. Catalyzes the first oxidative step of the phenylpropanoid pathway in higher plants by transforming trans-cinnamate into p-coumarate. The compounds formed by this pathway are essential components for lignification, pollination, and defense against ultraviolet light, predators and pathogens. The polypeptide is Trans-cinnamate 4-monooxygenase (CYP73A19) (Cicer arietinum (Chickpea)).